A 404-amino-acid polypeptide reads, in one-letter code: Cysteine desulfurase IscS (404 aa).

Residues 75 to 76 (AT), asparagine 155, glutamine 183, and 203 to 205 (SAH) contribute to the pyridoxal 5'-phosphate site. Lysine 206 carries the post-translational modification N6-(pyridoxal phosphate)lysine. A pyridoxal 5'-phosphate-binding site is contributed by threonine 243. Catalysis depends on cysteine 328, which acts as the Cysteine persulfide intermediate. Cysteine 328 is a binding site for [2Fe-2S] cluster.

This sequence belongs to the class-V pyridoxal-phosphate-dependent aminotransferase family. NifS/IscS subfamily. Homodimer. Forms a heterotetramer with IscU, interacts with other sulfur acceptors. Requires pyridoxal 5'-phosphate as cofactor.

It localises to the cytoplasm. It catalyses the reaction (sulfur carrier)-H + L-cysteine = (sulfur carrier)-SH + L-alanine. Its pathway is cofactor biosynthesis; iron-sulfur cluster biosynthesis. Functionally, master enzyme that delivers sulfur to a number of partners involved in Fe-S cluster assembly, tRNA modification or cofactor biosynthesis. Catalyzes the removal of elemental sulfur atoms from cysteine to produce alanine. Functions as a sulfur delivery protein for Fe-S cluster synthesis onto IscU, an Fe-S scaffold assembly protein, as well as other S acceptor proteins. In Vibrio campbellii (strain ATCC BAA-1116), this protein is Cysteine desulfurase IscS.